The following is a 208-amino-acid chain: uncharacterized protein (208 aa).

This is an uncharacterized protein from Caenorhabditis elegans.